We begin with the raw amino-acid sequence, 235 residues long: Protein MAINTENANCE OF PSII UNDER HIGH LIGHT 1 (235 aa).

A helical transmembrane segment spans residues 127–147 (TAAIVAGIALIAVAAASSILL). The disordered stretch occupies residues 181–235 (QPSTPSVTEAPPVAELETSLPETPSVAQQETSLPETMASEAQPEASSVPTTSSTS). Composition is skewed to polar residues over residues 200 to 214 (LPET…TSLP) and 224 to 235 (EASSVPTTSSTS).

In terms of assembly, interacts with psbA, psbB, psbC and psbD.

The protein resides in the plastid. Its subcellular location is the chloroplast thylakoid membrane. Functionally, interacts with photosystem II (PSII) core complexes and participates in the maintenance of normal PSII activity under photoinhibitory stress. May protect against photodamage or stabilize PSII under high-light stress. Participates in the maintainance of proper PSII function under high-light stress by protecting PSII from photooxidative damage. This Arabidopsis thaliana (Mouse-ear cress) protein is Protein MAINTENANCE OF PSII UNDER HIGH LIGHT 1.